Consider the following 297-residue polypeptide: Glutamyl-Q tRNA(Asp) synthetase (297 aa).

L-glutamate is bound by residues 9-13 (RFAPS) and E45. A 'HIGH' region motif is present at residues 12 to 22 (PSPTGPLHFGS). Residues C101, C103, and C118 each coordinate Zn(2+). Positions 170 and 188 each coordinate L-glutamate. The short motif at 226 to 230 (KLSKS) is the 'KMSKS' region element. K229 contributes to the ATP binding site.

It belongs to the class-I aminoacyl-tRNA synthetase family. GluQ subfamily. It depends on Zn(2+) as a cofactor.

Catalyzes the tRNA-independent activation of glutamate in presence of ATP and the subsequent transfer of glutamate onto a tRNA(Asp). Glutamate is transferred on the 2-amino-5-(4,5-dihydroxy-2-cyclopenten-1-yl) moiety of the queuosine in the wobble position of the QUC anticodon. The chain is Glutamyl-Q tRNA(Asp) synthetase from Xanthomonas campestris pv. campestris (strain 8004).